A 188-amino-acid polypeptide reads, in one-letter code: Probable thymidylate kinase (188 aa).

Position 11–18 (11–18 (GIDGSGKT)) interacts with ATP.

Belongs to the thymidylate kinase family.

The catalysed reaction is dTMP + ATP = dTDP + ADP. In Methanocaldococcus jannaschii (strain ATCC 43067 / DSM 2661 / JAL-1 / JCM 10045 / NBRC 100440) (Methanococcus jannaschii), this protein is Probable thymidylate kinase (tmk).